The following is a 382-amino-acid chain: Cell division protein FtsZ (382 aa).

GTP contacts are provided by residues glycine 21–asparagine 25, glycine 108–glycine 110, glutamate 139, arginine 143, and aspartate 187. The tract at residues arginine 322 to arginine 382 is disordered. Basic and acidic residues predominate over residues lysine 340 to arginine 352.

The protein belongs to the FtsZ family. As to quaternary structure, homodimer. Polymerizes to form a dynamic ring structure in a strictly GTP-dependent manner. Interacts directly with several other division proteins.

Its subcellular location is the cytoplasm. Its function is as follows. Essential cell division protein that forms a contractile ring structure (Z ring) at the future cell division site. The regulation of the ring assembly controls the timing and the location of cell division. One of the functions of the FtsZ ring is to recruit other cell division proteins to the septum to produce a new cell wall between the dividing cells. Binds GTP and shows GTPase activity. The sequence is that of Cell division protein FtsZ from Halalkalibacterium halodurans (strain ATCC BAA-125 / DSM 18197 / FERM 7344 / JCM 9153 / C-125) (Bacillus halodurans).